The following is a 234-amino-acid chain: MPPIEPHVCPDLKELRRHQETLAQSVRLEPLQGQPETVAGVDAAYAGEEIVAVAVLFDLATLTPVARSFVVARPALPYIPGFLSFREGPHLAEAVRRLSKRPDLLIVDGQGIAHLKRFGLACHLGVELGIPAIGCAKSRLVGEYVEPAAERGSRTLLLDRKEAVGAVLRTRSNVRPVFVSPGHLITIDEAVAMVLRTTAGFRLPEPQREADRFAAEIKRKLLAGEAYANTRCKA.

Mg(2+) contacts are provided by Asp-42 and Asp-108.

It belongs to the endonuclease V family. Requires Mg(2+) as cofactor.

Its subcellular location is the cytoplasm. The enzyme catalyses Endonucleolytic cleavage at apurinic or apyrimidinic sites to products with a 5'-phosphate.. Its function is as follows. DNA repair enzyme involved in the repair of deaminated bases. Selectively cleaves double-stranded DNA at the second phosphodiester bond 3' to a deoxyinosine leaving behind the intact lesion on the nicked DNA. The protein is Endonuclease V of Geotalea uraniireducens (strain Rf4) (Geobacter uraniireducens).